The following is a 79-amino-acid chain: Small ribosomal subunit protein bS18 (79 aa).

Belongs to the bacterial ribosomal protein bS18 family. Part of the 30S ribosomal subunit. Forms a tight heterodimer with protein bS6.

Binds as a heterodimer with protein bS6 to the central domain of the 16S rRNA, where it helps stabilize the platform of the 30S subunit. In Nitrobacter hamburgensis (strain DSM 10229 / NCIMB 13809 / X14), this protein is Small ribosomal subunit protein bS18.